The primary structure comprises 362 residues: uncharacterized protein (362 aa).

The next 7 helical transmembrane spans lie at 32–52 (GAGWACGVTVVLTPPGTVGAV), 75–95 (FVDAVLLAGGSAYGLAAADGV), 106–126 (VVMLGGVVPIVPGAVIFDLSV), 148–168 (AAVGGQDATVAVGTVGAGVGA), 176–196 (GVGTASITLESGPTVGAVVVV), 287–307 (VFALATGAVEATATADVPVAM), and 329–349 (VLVAVLAAESVAGIPTYCGMF).

It belongs to the peptidase S58 family.

Its subcellular location is the cell membrane. Functionally, aminopeptidase. This is an uncharacterized protein from Mycobacterium leprae (strain TN).